A 548-amino-acid chain; its full sequence is Fumarate hydratase class I, aerobic (548 aa).

Residues C105, C224, and C318 each contribute to the [4Fe-4S] cluster site.

This sequence belongs to the class-I fumarase family. Homodimer. It depends on [4Fe-4S] cluster as a cofactor.

The enzyme catalyses (S)-malate = fumarate + H2O. It carries out the reaction oxaloacetate = enol-oxaloacetate. Its pathway is carbohydrate metabolism; tricarboxylic acid cycle; (S)-malate from fumarate: step 1/1. Functionally, catalyzes the reversible hydration of fumarate to (S)-malate. Functions as an aerobic enzyme in the direction of malate formation as part of the citric acid cycle. Accounts for about 80% of the fumarase activity when the bacteria grow aerobically. To a lesser extent, also displays D-tartrate dehydratase activity in vitro, but is not able to convert (R)-malate, L-tartrate or meso-tartrate. Can also catalyze the isomerization of enol- to keto-oxaloacetate. The sequence is that of Fumarate hydratase class I, aerobic from Escherichia coli O6:H1 (strain CFT073 / ATCC 700928 / UPEC).